We begin with the raw amino-acid sequence, 708 residues long: Leukotoxin translocation ATP-binding protein LktB (708 aa).

In terms of domain architecture, Peptidase C39 spans 1 to 126; sequence MEANHQRNDL…ACYQGQLILV (126 aa). The region spanning 155-437 is the ABC transmembrane type-1 domain; it reads FLETLIVSIF…LAQLWQDFQQ (283 aa). The next 5 membrane-spanning stretches (helical) occupy residues 159-179, 192-212, 270-290, 296-316, and 389-409; these read LIVSIFLQIFALITPLFFQVV, LNIITVALAIVIIFEIVLSGL, ALTSVLDLLFSFIFFAVMWYY, LVILGSLPFYILWSIFISPIL, and VMVINLWLGAHLVISGDLSIG. Residues 469–704 enclose the ABC transporter domain; that stretch reads ISFKNIRFRY…SNGLYSYLHQ (236 aa). ATP is bound at residue 503–510; the sequence is GRSGSGKS.

Belongs to the ABC transporter superfamily. Protein-1 exporter (TC 3.A.1.109) family. In terms of assembly, homodimer.

It is found in the cell inner membrane. The enzyme catalyses ATP + H2O + proteinSide 1 = ADP + phosphate + proteinSide 2.. Its function is as follows. Part of the ABC transporter complex LktBD involved in leukotoxin export. Transmembrane domains (TMD) form a pore in the inner membrane and the ATP-binding domain (NBD) is responsible for energy generation. This chain is Leukotoxin translocation ATP-binding protein LktB (lktB), found in Bibersteinia trehalosi (Pasteurella trehalosi).